Reading from the N-terminus, the 62-residue chain is Large ribosomal subunit protein uL30 (62 aa).

Belongs to the universal ribosomal protein uL30 family. In terms of assembly, part of the 50S ribosomal subunit.

The chain is Large ribosomal subunit protein uL30 from Geobacillus kaustophilus (strain HTA426).